The following is a 349-amino-acid chain: Probable ethanolamine kinase (349 aa).

This sequence belongs to the choline/ethanolamine kinase family.

It is found in the cytoplasm. The catalysed reaction is ethanolamine + ATP = phosphoethanolamine + ADP + H(+). It participates in phospholipid metabolism; phosphatidylethanolamine biosynthesis; phosphatidylethanolamine from ethanolamine: step 1/3. In terms of biological role, highly specific for ethanolamine phosphorylation. May be a rate-controlling step in phosphatidylethanolamine biosynthesis. The protein is Probable ethanolamine kinase (etnk) of Nematostella vectensis (Starlet sea anemone).